The following is a 481-amino-acid chain: ATP synthase subunit beta, chloroplastic (481 aa).

161–168 (GGAGVGKT) serves as a coordination point for ATP.

Belongs to the ATPase alpha/beta chains family. As to quaternary structure, F-type ATPases have 2 components, CF(1) - the catalytic core - and CF(0) - the membrane proton channel. CF(1) has five subunits: alpha(3), beta(3), gamma(1), delta(1), epsilon(1). CF(0) has four main subunits: a(1), b(1), b'(1) and c(9-12).

The protein resides in the plastid. It is found in the chloroplast thylakoid membrane. It catalyses the reaction ATP + H2O + 4 H(+)(in) = ADP + phosphate + 5 H(+)(out). In terms of biological role, produces ATP from ADP in the presence of a proton gradient across the membrane. The catalytic sites are hosted primarily by the beta subunits. The protein is ATP synthase subunit beta, chloroplastic of Mesostigma viride (Green alga).